The chain runs to 1679 residues: [F-actin]-monooxygenase mical2b (1679 aa).

The monooxygenase domain stretch occupies residues 2-494 (GETEEERTSQ…RHLFISGEQD (493 aa)). FAD contacts are provided by residues Cys97, 97–125 (CGFR…SRNN), Glu116, Arg118, Arg123, Asn125, and Asp398. The Calponin-homology (CH) domain maps to 516-619 (EVRPGRLLLW…MVLYLSKFYE (104 aa)). The Nuclear localization signal signature appears at 658-679 (RKRIPKLDKKLEESDVNRKRKK). Disordered stretches follow at residues 661–772 (IPKL…KAKW), 818–838 (SAYK…TPTL), 874–907 (SSLF…ESST), 1073–1163 (STRH…RSTA), 1194–1247 (KPED…DEIP), 1259–1283 (EYPK…ISFS), 1302–1342 (DLTN…PAPP), and 1473–1509 (RNKA…KKKE). 2 stretches are compositionally biased toward basic and acidic residues: residues 662-674 (PKLD…SDVN) and 697-707 (GEREEQKENKV). Over residues 874-888 (SSLFTGNPAQPQTDE) the composition is skewed to polar residues. The region spanning 1011–1073 (DTCVFCQKRV…KMHFSQRKTS (63 aa)) is the LIM zinc-binding domain. Low complexity predominate over residues 1086-1099 (IRSSSITISNHTST). Positions 1112–1123 (DSSTQQDLQTLP) are enriched in polar residues. Residues 1133-1143 (EVKDSSKKADP) are compositionally biased toward basic and acidic residues. The segment covering 1144–1154 (ADSAPACPDSP) has biased composition (low complexity). Over residues 1202–1211 (LAEEDGNSDF) the composition is skewed to acidic residues. Polar residues predominate over residues 1220–1242 (SKKPSNPSTDSNCLPTKDNSSTP). A compositionally biased stretch (low complexity) spans 1259-1270 (EYPKPSSSSPEP). Over residues 1302 to 1325 (DLTNPGKSGAEEQQQQHVKPSISL) the composition is skewed to polar residues. Residues 1333 to 1342 (THPQPEPAPP) are compositionally biased toward pro residues. The segment covering 1475–1489 (KASAQQQQQQKSNSS) has biased composition (low complexity). In terms of domain architecture, bMERB spans 1517-1667 (KSDELKRLHR…EKAEDRDLES (151 aa)).

The protein belongs to the Mical family. It depends on FAD as a cofactor.

It is found in the nucleus. The protein localises to the cytoplasm. The catalysed reaction is L-methionyl-[F-actin] + NADPH + O2 + H(+) = L-methionyl-(R)-S-oxide-[F-actin] + NADP(+) + H2O. Functionally, nuclear monooxygenase that promotes depolymerization of F-actin by mediating oxidation of specific methionine residues on actin and regulates the srf signaling. Acts by modifying nuclear actin subunits through the addition of oxygen to form methionine-sulfoxide, leading to promote actin filament severing and prevent repolymerization. Acts as a key regulator of the srf signaling pathway elicited by nerve growth factor and serum: mediates oxidation and subsequent depolymerization of nuclear actin, leading to increase mkl1/mrtf-a presence in the nucleus and promote srf:mkl1/mrtf-a-dependent gene transcription. This is [F-actin]-monooxygenase mical2b from Danio rerio (Zebrafish).